The chain runs to 467 residues: MTKIASVANILKGKITVGETVTVRGWIRTRRDSKAGLSFLAIYDGSCFDPIQAIVNNDIENYETEILRLTTGCSVVVTGKIAESPAEGQAVELQANKIEVSGWVDDPETYPMSAKRHSIEYLREVAHLRPRTNIIGAVARVRHCLAQAIHRFFHEQGFYWVATPLITASDTEGAGEMFRVSTLDLENLPRTDKGAVDFSQDFFGKESFLTVSGQLNGESYACALSKIYTFGPTFRAENSNTTRHLAEFWMVEPEIAFATLADNAKLAEDMLKYVFRAVLNEREDDLKFFEKHVDKNVITRLKDFINSDFAQIDYTDAIDILLKSGKAFEFPVSWGIDLSSEHERYLAEEYFKSPVVVKNYPKDIKAFYMRLNDDGKTVAAMDVLAPGIGEIIGGSQREERLEVLDKRIAEMGLKAEDYWWYRDLRRYGTVPHAGFGLGFERLIVYVTGVQNIRDVIPFPRTPRNANF.

This sequence belongs to the class-II aminoacyl-tRNA synthetase family. In terms of assembly, homodimer.

Its subcellular location is the cytoplasm. The enzyme catalyses tRNA(Asn) + L-asparagine + ATP = L-asparaginyl-tRNA(Asn) + AMP + diphosphate + H(+). This Histophilus somni (strain 129Pt) (Haemophilus somnus) protein is Asparagine--tRNA ligase.